The sequence spans 256 residues: tRNA pseudouridine synthase A (256 aa).

Asp55 (nucleophile) is an active-site residue. Residue Tyr113 participates in substrate binding.

Belongs to the tRNA pseudouridine synthase TruA family. In terms of assembly, homodimer.

The enzyme catalyses uridine(38/39/40) in tRNA = pseudouridine(38/39/40) in tRNA. Its function is as follows. Formation of pseudouridine at positions 38, 39 and 40 in the anticodon stem and loop of transfer RNAs. This Limosilactobacillus reuteri (strain DSM 20016) (Lactobacillus reuteri) protein is tRNA pseudouridine synthase A.